We begin with the raw amino-acid sequence, 2023 residues long: Protein Daple (2023 aa).

Positions 11–131 constitute a Calponin-homology (CH) domain; that stretch reads NFMDSPLVVW…RMLLLILGCA (121 aa). Coiled-coil stretches lie at residues 250–415, 458–1064, and 1105–1419; these read RQHL…LLEE, NESA…VEKN, and LKQI…QYKF. Positions 1013–1035 are disordered; that stretch reads RHEEEAAHSEISQQTLGQTRSLP. Positions 1022–1033 are enriched in polar residues; sequence EISQQTLGQTRS. Disordered regions lie at residues 1441–1824 and 1837–2023; these read KPKK…GSAS and LRSN…YGCV. Residues 1442–1460 show a composition bias toward basic and acidic residues; that stretch reads PKKESSRERPDAPRERIRS. The segment covering 1478–1491 has biased composition (pro residues); sequence SAPPPPPPPLPPRQ. Polar residues-rich tracts occupy residues 1497–1518 and 1564–1585; these read DSMNSQSVEENHVQSPTLSSPA and TCSTPLSRNSHNAPGFTSSSSL. 2 stretches are compositionally biased toward low complexity: residues 1623 to 1643 and 1667 to 1704; these read SAEFSRNTSSSNSPVSSKGSL and RLSQSSLLPRSSTLPCDSPSASRPSQRPASRRPSSPGS. Positions 1700–1728 match the GBA motif; that stretch reads SSPGSEMVTLEEFLQESNALSPPTVQTGS. Polar residues-rich tracts occupy residues 1714 to 1727, 1752 to 1763, 1785 to 1799, and 1809 to 1824; these read QESNALSPPTVQTG, TPTNYVTPTVKT, LTDTSTPPSHSQTLP, and ALQQSSPRGSVGGSAS. Basic and acidic residues predominate over residues 1890–1904; sequence VDPRRLSLAQPRDEF. Residues 1927–1945 show a composition bias toward low complexity; that stretch reads GSGSSRAGAARSGSAQPRG. Over residues 1974–1988 the composition is skewed to basic and acidic residues; the sequence is QEQREAESPLLKKAD. Residues 1989-2014 are compositionally biased toward polar residues; the sequence is TTNLSYASKEQPTSKPASPDPNNDPQ. A PDZ-binding motif is present at residues 2020–2023; the sequence is YGCV.

This sequence belongs to the CCDC88 family.

It is found in the cytoplasm. Its subcellular location is the cell junction. Functionally, positive regulator of Wnt signaling, acting synergistically with dvl2. Functions upstream of ctnnb1/beta-catenin in the canonical Wnt pathway, and also activates jnk in the Wnt/planar cell polarity (PCP) pathway. Acts as a non-receptor guanine nucleotide exchange factor which binds to and activates guanine nucleotide-binding protein G(i) alpha (Gi-alpha) subunits. This promotes apical cell constriction and subsequent bending of the neural plate during neurulation via arhgef18. The sequence is that of Protein Daple from Danio rerio (Zebrafish).